The sequence spans 574 residues: Ribonuclease Y (574 aa).

A helical transmembrane segment spans residues 1–21 (MSLLDLVLLLLVLGLGGVLLL). Positions 264 to 327 (AVTVVPIPSD…EIARMALEEL (64 aa)) constitute a KH domain. Residues 390–483 (VLKHSIQVAH…VAAADALSAA (94 aa)) form the HD domain.

It belongs to the RNase Y family.

It localises to the cell membrane. Its function is as follows. Endoribonuclease that initiates mRNA decay. The chain is Ribonuclease Y from Thermus thermophilus (strain ATCC BAA-163 / DSM 7039 / HB27).